Consider the following 431-residue polypeptide: Tyrosine--tRNA ligase (431 aa).

Tyrosine 33 contributes to the L-tyrosine binding site. The 'HIGH' region motif lies at 38–47 (PTADSLHIGS). Positions 172 and 176 each coordinate L-tyrosine. Residues 234–238 (KFGKS) carry the 'KMSKS' region motif. Lysine 237 provides a ligand contact to ATP. The S4 RNA-binding domain maps to 364 to 431 (INIVEVLNEK…KKNYFVLNVK (68 aa)).

The protein belongs to the class-I aminoacyl-tRNA synthetase family. TyrS type 1 subfamily. As to quaternary structure, homodimer.

It is found in the cytoplasm. It carries out the reaction tRNA(Tyr) + L-tyrosine + ATP = L-tyrosyl-tRNA(Tyr) + AMP + diphosphate + H(+). Its function is as follows. Catalyzes the attachment of tyrosine to tRNA(Tyr) in a two-step reaction: tyrosine is first activated by ATP to form Tyr-AMP and then transferred to the acceptor end of tRNA(Tyr). In Flavobacterium psychrophilum (strain ATCC 49511 / DSM 21280 / CIP 103535 / JIP02/86), this protein is Tyrosine--tRNA ligase.